A 153-amino-acid chain; its full sequence is Superoxide dismutase [Cu-Zn] (153 aa).

Residues H46, H48, and H63 each contribute to the Cu cation site. A disulfide bridge links C57 with C146. The segment at 61-80 is disordered; that stretch reads GPHFNPFGKEHGAPEDENRH. H63, H71, H80, and D83 together coordinate Zn(2+). A compositionally biased stretch (basic and acidic residues) spans 68-80; it reads GKEHGAPEDENRH. H120 is a Cu cation binding site. Positions 124 to 136 are enriched in basic and acidic residues; it reads DDLGRSEHPESKK. The tract at residues 124 to 143 is disordered; it reads DDLGRSEHPESKKTGNAGAR. R143 lines the substrate pocket.

It belongs to the Cu-Zn superoxide dismutase family. Homodimer. The cofactor is Cu cation. It depends on Zn(2+) as a cofactor.

The protein localises to the cytoplasm. It carries out the reaction 2 superoxide + 2 H(+) = H2O2 + O2. Destroys radicals which are normally produced within the cells and which are toxic to biological systems. The protein is Superoxide dismutase [Cu-Zn] (sodC) of Aspergillus flavus.